The sequence spans 440 residues: L-seryl-tRNA(Sec) selenium transferase (440 aa).

Position 282 is an N6-(pyridoxal phosphate)lysine (K282).

Belongs to the SelA family. Pyridoxal 5'-phosphate serves as cofactor.

The protein localises to the cytoplasm. The enzyme catalyses L-seryl-tRNA(Sec) + selenophosphate + H(+) = L-selenocysteinyl-tRNA(Sec) + phosphate. The protein operates within aminoacyl-tRNA biosynthesis; selenocysteinyl-tRNA(Sec) biosynthesis; selenocysteinyl-tRNA(Sec) from L-seryl-tRNA(Sec) (bacterial route): step 1/1. Converts seryl-tRNA(Sec) to selenocysteinyl-tRNA(Sec) required for selenoprotein biosynthesis. The protein is L-seryl-tRNA(Sec) selenium transferase of Campylobacter jejuni subsp. jejuni serotype O:6 (strain 81116 / NCTC 11828).